The sequence spans 330 residues: Glucan endo-1,3-beta-glucosidase GIII (330 aa).

Positions 1 to 25 (MARKGVDVAVALVLVALAAFPAVHS) are cleaved as a signal peptide. Glu-117 acts as the Proton donor in catalysis. Glu-255 functions as the Nucleophile in the catalytic mechanism.

It belongs to the glycosyl hydrolase 17 family.

It carries out the reaction Hydrolysis of (1-&gt;3)-beta-D-glucosidic linkages in (1-&gt;3)-beta-D-glucans.. Functionally, may provide a degree of protection against microbial invasion of germinated barley grain through its ability to degrade fungal cell wall polysaccharides. The chain is Glucan endo-1,3-beta-glucosidase GIII from Hordeum vulgare (Barley).